A 502-amino-acid chain; its full sequence is Glycerol kinase (502 aa).

Threonine 14 lines the ADP pocket. Threonine 14, threonine 15, and serine 16 together coordinate ATP. Threonine 14 serves as a coordination point for sn-glycerol 3-phosphate. Arginine 18 serves as a coordination point for ADP. Residues arginine 84, glutamate 85, tyrosine 136, and aspartate 246 each contribute to the sn-glycerol 3-phosphate site. Residues arginine 84, glutamate 85, tyrosine 136, aspartate 246, and glutamine 247 each coordinate glycerol. The ADP site is built by threonine 268 and glycine 311. Residues threonine 268, glycine 311, glutamine 315, and glycine 412 each contribute to the ATP site. Glycine 412 and asparagine 416 together coordinate ADP.

The protein belongs to the FGGY kinase family. Homotetramer and homodimer (in equilibrium). Heterodimer with EIIA-Glc. Binds 1 zinc ion per glycerol kinase EIIA-Glc dimer. The zinc ion is important for dimerization.

It catalyses the reaction glycerol + ATP = sn-glycerol 3-phosphate + ADP + H(+). It participates in polyol metabolism; glycerol degradation via glycerol kinase pathway; sn-glycerol 3-phosphate from glycerol: step 1/1. Its activity is regulated as follows. Activity of this regulatory enzyme is affected by several metabolites. Allosterically and non-competitively inhibited by fructose 1,6-bisphosphate (FBP) and unphosphorylated phosphocarrier protein EIIA-Glc (III-Glc), an integral component of the bacterial phosphotransferase (PTS) system. Functionally, key enzyme in the regulation of glycerol uptake and metabolism. Catalyzes the phosphorylation of glycerol to yield sn-glycerol 3-phosphate. The sequence is that of Glycerol kinase from Citrobacter koseri (strain ATCC BAA-895 / CDC 4225-83 / SGSC4696).